The following is an 85-amino-acid chain: Large ribosomal subunit protein bL27 (85 aa).

The disordered stretch occupies residues 1–20 (MAHKKAGGSSRNGRDSEAKR).

It belongs to the bacterial ribosomal protein bL27 family.

In Aeromonas salmonicida (strain A449), this protein is Large ribosomal subunit protein bL27.